A 105-amino-acid polypeptide reads, in one-letter code: Malonate decarboxylase acyl carrier protein (105 aa).

Ser28 is subject to O-(phosphoribosyl dephospho-coenzyme A)serine.

This sequence belongs to the MdcC family. In terms of processing, covalently binds the prosthetic group of malonate decarboxylase.

It is found in the cytoplasm. Subunit of malonate decarboxylase, it is an acyl carrier protein to which acetyl and malonyl thioester residues are bound via a 2'-(5''-phosphoribosyl)-3'-dephospho-CoA prosthetic group and turn over during the catalytic mechanism. This is Malonate decarboxylase acyl carrier protein from Xanthomonas campestris pv. campestris (strain 8004).